The following is a 1264-amino-acid chain: uncharacterized protein (1264 aa).

The first 18 residues, 1–18, serve as a signal peptide directing secretion; that stretch reads MMRKYLILLILLPALAVG. Residues 1215–1235 form a helical membrane-spanning segment; sequence SYTVLGVVVITILTMSIILCL.

Its subcellular location is the host membrane. This is an uncharacterized protein from Ostreid herpesvirus 1 (isolate France) (OsHV-1).